Consider the following 204-residue polypeptide: Guanylate kinase (204 aa).

A Guanylate kinase-like domain is found at proline 18–isoleucine 196. Alanine 25–threonine 32 serves as a coordination point for ATP.

The protein belongs to the guanylate kinase family.

It localises to the cytoplasm. The enzyme catalyses GMP + ATP = GDP + ADP. Functionally, essential for recycling GMP and indirectly, cGMP. The sequence is that of Guanylate kinase from Chlamydia felis (strain Fe/C-56) (Chlamydophila felis).